A 96-amino-acid polypeptide reads, in one-letter code: MGSGYAKKKKEAKIMEQQFLEMEASLEKKRYEGQAGNGLVSVVINGKCDIVSVKVQPTCLDPEEPEVIEDLFRSAFKEAKTAMDQEMSVMRAGLPF.

This sequence belongs to the YbaB/EbfC family. In terms of assembly, homodimer.

The protein localises to the cytoplasm. The protein resides in the nucleoid. Functionally, binds to DNA and alters its conformation. May be involved in regulation of gene expression, nucleoid organization and DNA protection. The polypeptide is Nucleoid-associated protein CF0672 (Chlamydia felis (strain Fe/C-56) (Chlamydophila felis)).